The chain runs to 420 residues: Glutamyl-tRNA reductase (420 aa).

Residues 49–52 (TCNR), serine 107, 112–114 (EPQ), and glutamine 118 each bind substrate. Cysteine 50 functions as the Nucleophile in the catalytic mechanism. 187-192 (GAGETI) contributes to the NADP(+) binding site.

This sequence belongs to the glutamyl-tRNA reductase family. As to quaternary structure, homodimer.

The catalysed reaction is (S)-4-amino-5-oxopentanoate + tRNA(Glu) + NADP(+) = L-glutamyl-tRNA(Glu) + NADPH + H(+). It participates in porphyrin-containing compound metabolism; protoporphyrin-IX biosynthesis; 5-aminolevulinate from L-glutamyl-tRNA(Glu): step 1/2. Its function is as follows. Catalyzes the NADPH-dependent reduction of glutamyl-tRNA(Glu) to glutamate 1-semialdehyde (GSA). In Photobacterium profundum (strain SS9), this protein is Glutamyl-tRNA reductase.